The primary structure comprises 512 residues: Cytochrome P450 monooxygenase 208 (512 aa).

Residues 4 to 24 (LFLVLDTGAAVLLVALLFVVY) traverse the membrane as a helical segment. C438 is a heme binding site.

Belongs to the cytochrome P450 family. Heme is required as a cofactor.

It is found in the membrane. It participates in secondary metabolite biosynthesis. In terms of biological role, cytochrome P450 monooxygenase that is able to use 7-ethoxycoumarin as a substrate for oxidation. The sequence is that of Cytochrome P450 monooxygenase 208 from Postia placenta (strain ATCC 44394 / Madison 698-R) (Brown rot fungus).